The following is a 750-amino-acid chain: MGRCNRGSGPPSSLLLLLLLLLWLLAVPGASAAPRSALYSPSDPLTLLQADTVRGAVLGSRSAWAVEFFASWCGHCIAFAPTWKALAEDVKAWRPALNLAALDCAEETNSAVCRDFNIPGFPTVRFFKAFTKNGSGAVFPVAGADVQTLRERLIDALESHHDTWPPACPPLEPARLEEIDGFFARNNEEYLALIFEKGGSYLGREVALDLSQHKGVAVRRVLNTEANVVRKFGVTDFPSCYLLFRNGSVSRVPVLMESRSFYTAYLQRLSGLTREAAQTTVAPTTANKIAPTVWKFADRSKIYMADLESALHYILRIEVGRFPVLEGQCLVALKKFVAVLAKYFPGRPLVQNFLHSVNEWLKRQKRNKIPYSFFKTALDDRKEGAVLAKKVNWIGCQGSEPHFRGFPCSLWVLFHFLTVQAARQNIDRSQEAAKAKEVLPAIRGYVHYFFGCRDCASHFEQMAAASMHRVRSPNAAVLWLWSSHNRVNARLAGAPSEDPQFPKVQWPPRELCSACHNERLDVPVWDVEATLNFLKAHFSPSNIILDFAAAGSAAQREAQNVAAAPELAMGALELESRNSTVDLGKPEMMKSSTNTTPDVPAERPEASRPPKLRPGLGAAPGQEPPEHMAELQTNEREQPRGQWHLSKRDTGAALLAESRAEKNHLWGPSEVRRVGRSSKQLVDIPEGQLEAQAGRGRGQWLQVLGGGFSYLDISLCVGLYSLSFMGLLAMYAYFRAKIRALKGHAGHPAA.

A signal peptide spans 1-32 (MGRCNRGSGPPSSLLLLLLLLLWLLAVPGASA). Residues 39–159 (YSPSDPLTLL…RERLIDALES (121 aa)) form the Thioredoxin domain. Active-site nucleophile residues include cysteine 73 and cysteine 76. Intrachain disulfides connect cysteine 73–cysteine 76 and cysteine 104–cysteine 113. Asparagine 133 and asparagine 246 each carry an N-linked (GlcNAc...) asparagine glycan. A disulfide bridge connects residues cysteine 396 and cysteine 408. Positions 399 to 506 (SEPHFRGFPC…EDPQFPKVQW (108 aa)) constitute an ERV/ALR sulfhydryl oxidase domain. FAD contacts are provided by arginine 404, tryptophan 411, and histidine 415. At serine 429 the chain carries Phosphoserine. Cysteine 452 and cysteine 455 are disulfide-bonded. FAD is bound by residues aspartate 454, histidine 458, 481–488 (WSSHNRVN), lysine 503, and tryptophan 506. Cysteine 512 and cysteine 515 are joined by a disulfide. Residue asparagine 578 is glycosylated (N-linked (GlcNAc...) asparagine). The segment at 578 to 645 (NSTVDLGKPE…REQPRGQWHL (68 aa)) is disordered. Over residues 624 to 639 (PPEHMAELQTNEREQP) the composition is skewed to basic and acidic residues. A helical membrane pass occupies residues 713–733 (ISLCVGLYSLSFMGLLAMYAY).

This sequence belongs to the quiescin-sulfhydryl oxidase (QSOX) family. In terms of assembly, monomer. FAD serves as cofactor. N-glycosylated. O-glycosylated on Thr and Ser residues.

Its subcellular location is the golgi apparatus membrane. The protein localises to the secreted. The enzyme catalyses 2 R'C(R)SH + O2 = R'C(R)S-S(R)CR' + H2O2. In terms of biological role, catalyzes the oxidation of sulfhydryl groups in peptide and protein thiols to disulfides with the reduction of oxygen to hydrogen peroxide. Plays a role in disulfide bond formation in a variety of extracellular proteins. In fibroblasts, required for normal incorporation of laminin into the extracellular matrix, and thereby for normal cell-cell adhesion and cell migration. The chain is Sulfhydryl oxidase 1 (QSOX1) from Pongo abelii (Sumatran orangutan).